A 481-amino-acid chain; its full sequence is UDP-N-acetylmuramoyl-L-alanyl-D-glutamate--L-lysine ligase (481 aa).

Serine 42 is a UDP-N-acetyl-alpha-D-muramoyl-L-alanyl-D-glutamate binding site. 118 to 124 contributes to the ATP binding site; that stretch reads GTKGKTT. Residues 160 to 161, serine 187, and arginine 195 contribute to the UDP-N-acetyl-alpha-D-muramoyl-L-alanyl-D-glutamate site; that span reads TT. At lysine 229 the chain carries N6-carboxylysine. Positions 404–407 match the L-lysine recognition motif motif; that stretch reads DDPN.

The protein belongs to the MurCDEF family. MurE subfamily. Post-translationally, carboxylation is probably crucial for Mg(2+) binding and, consequently, for the gamma-phosphate positioning of ATP.

It localises to the cytoplasm. The enzyme catalyses UDP-N-acetyl-alpha-D-muramoyl-L-alanyl-D-glutamate + L-lysine + ATP = UDP-N-acetyl-alpha-D-muramoyl-L-alanyl-gamma-D-glutamyl-L-lysine + ADP + phosphate + H(+). The protein operates within cell wall biogenesis; peptidoglycan biosynthesis. Functionally, catalyzes the addition of L-lysine to the nucleotide precursor UDP-N-acetylmuramoyl-L-alanyl-D-glutamate (UMAG) in the biosynthesis of bacterial cell-wall peptidoglycan. This is UDP-N-acetylmuramoyl-L-alanyl-D-glutamate--L-lysine ligase from Streptococcus pneumoniae (strain ATCC BAA-255 / R6).